Consider the following 413-residue polypeptide: ORC1-type DNA replication protein 2 (413 aa).

Residues Thr70–Ala74, Tyr217, and Arg229 contribute to the ATP site.

Belongs to the CDC6/cdc18 family. Monomer. Interacts with Cdc6-3, MCM and PolB1. In terms of processing, autophosphorylated in vitro.

Functionally, involved in regulation of DNA replication. May play essential roles in origin recognition and cell cycle control of replication. Binds both single-stranded and double-stranded DNA, with a preference for molecules that contain a bubble, a fork, or a tail. Has a weak ATPase activity. Stimulates the binding of the MCM helicase to the origin DNA, but strongly inhibits ATPase and DNA helicase activities of MCM. Also regulates the DNA polymerase and the nuclease activities of PolB1. This Saccharolobus solfataricus (strain ATCC 35092 / DSM 1617 / JCM 11322 / P2) (Sulfolobus solfataricus) protein is ORC1-type DNA replication protein 2 (cdc6-2).